We begin with the raw amino-acid sequence, 288 residues long: Homoserine kinase (288 aa).

78–88 (PLARGLGSSSS) is an ATP binding site.

It belongs to the GHMP kinase family. Homoserine kinase subfamily.

It is found in the cytoplasm. The enzyme catalyses L-homoserine + ATP = O-phospho-L-homoserine + ADP + H(+). It functions in the pathway amino-acid biosynthesis; L-threonine biosynthesis; L-threonine from L-aspartate: step 4/5. Its function is as follows. Catalyzes the ATP-dependent phosphorylation of L-homoserine to L-homoserine phosphate. The sequence is that of Homoserine kinase from Streptococcus agalactiae serotype V (strain ATCC BAA-611 / 2603 V/R).